A 78-amino-acid polypeptide reads, in one-letter code: Antimicrobial peptide marcin-18 (78 aa).

An N-terminal signal peptide occupies residues 1-23 (MQFKKQLMVIFLAYFLVVNESEA). Residue Arg41 is modified to Arginine amide. The propeptide occupies 42 to 78 (RKNQRSRSIMKRDLENLFDPYQRNLELDRLLKQLPNY).

Belongs to the non-disulfide-bridged peptide (NDBP) superfamily. Medium-length antimicrobial peptide (group 3) family. As to expression, expressed by the venom gland.

The protein localises to the secreted. It is found in the target cell membrane. Antimicrobial peptide with potent activity against bacteria. Acts by fastly disrupting the bacterial membrane. Shows activity against Gram-positive bacteria S.aureus (MIC=1.5-2.9 uM) and S.epidermidis (MIC=2.9 uM), M.luteus (MIC=23.4 uM), B.thuringiensis (MIC=2.9 uM), B.subtilis (MIC=2.9 uM) and Gram-negative bacteria E.coli (MIC=5.9-11.7 uM) and P.aeruginosa (MIC=5.9 uM), as well as against penicillin (MIC=2.9 uM) and methicillin (MIC=1.5-2.9 uM) resistant bacteria. Antibiotic activity is not affected by major negatively charged components of the prokaryotic cell wall (e.g. lipopolysaccharides and lipoteichoic acid). In vivo, in a mouse model of lethal peritonitis, shows potent antibiotic activity without cytotoxicity, improving the survival rate. This Olivierus martensii (Manchurian scorpion) protein is Antimicrobial peptide marcin-18.